The chain runs to 172 residues: Shikimate kinase (172 aa).

11–16 (GAGKST) lines the ATP pocket. S15 lines the Mg(2+) pocket. Residues D33, R57, and G79 each coordinate substrate. An ATP-binding site is contributed by R117. R136 is a binding site for substrate. Residue R153 coordinates ATP.

The protein belongs to the shikimate kinase family. Monomer. It depends on Mg(2+) as a cofactor.

The protein localises to the cytoplasm. It carries out the reaction shikimate + ATP = 3-phosphoshikimate + ADP + H(+). The protein operates within metabolic intermediate biosynthesis; chorismate biosynthesis; chorismate from D-erythrose 4-phosphate and phosphoenolpyruvate: step 5/7. Functionally, catalyzes the specific phosphorylation of the 3-hydroxyl group of shikimic acid using ATP as a cosubstrate. This chain is Shikimate kinase, found in Pseudomonas entomophila (strain L48).